The sequence spans 1108 residues: Probable E3 ubiquitin ligase SUD1 (1108 aa).

Residues 1–60 (MEISPADSLSISGAAASEVVSEPSVSSSSSSSSPNQASPNPFSNMDPAVSTATGSRYVDD) form a disordered region. Positions 10 to 44 (SISGAAASEVVSEPSVSSSSSSSSPNQASPNPFSN) are enriched in low complexity. The RING-CH-type zinc-finger motif lies at 60–121 (DDEDEEDVCR…EVCKHPFSFS (62 aa)). Positions 68, 71, 85, 87, 95, 98, 111, and 114 each coordinate Zn(2+). The next 2 membrane-spanning stretches (helical) occupy residues 157–177 (FVLSVWLLTIPFITFWIWRLA) and 197–217 (VILTDCLHGFLLSASIVFIFL). Basic and acidic residues predominate over residues 237–246 (ERDDDVDRNG). The segment at 237–273 (ERDDDVDRNGARAARRPAGQANRNLAGEGNGEDAGDQ) is disordered. Residues 286 to 308 (ENVLARLDIQAARLEAQVEQMFD) adopt a coiled-coil conformation. 8 helical membrane passes run 339-359 (FTVLASNMIFLGVVIFVPFTL), 362-382 (IILYHVSWLFAAARGPAVAAS), 462-482 (AVGYMFIVFLVFLYLGIIALI), 489-509 (PLTVGRFYGIASIVEAVPSLL), 525-545 (VAFLLVIELGVFPLMCGWWLD), 572-592 (LVHWVVGIMYMLQISIFVSLL), 630-650 (VLLSVAVYGSLIVMLVFLPVK), and 669-689 (PFTEIPADMLLFQICIPFIIE). Residues 762–784 (PNRSRLRAGNVNTGEEYEDDDEQ) form a disordered region. 6 consecutive transmembrane segments (helical) span residues 796-816 (IILLLLVAWVTLLLFNSALIV), 844-864 (YAFVIGTYAFWTTISGARYAI), 894-914 (AIWVFIIPVLIGLLFELLVIV), 923-943 (SPVFLLYQDWALGLIFLKIWT), 982-1002 (EIVFPIVMKLLTALCVPYVLA), and 1017-1036 (SAVYRFAWIGCLSVSLFCFC).

As to expression, expressed in cotyledons, leaves, roots, stems, inflorescences and siliques. Expression higher at the top than at the base of the stem.

It is found in the membrane. The catalysed reaction is S-ubiquitinyl-[E2 ubiquitin-conjugating enzyme]-L-cysteine + [acceptor protein]-L-lysine = [E2 ubiquitin-conjugating enzyme]-L-cysteine + N(6)-ubiquitinyl-[acceptor protein]-L-lysine.. The protein operates within protein modification; protein ubiquitination. In terms of biological role, probable E3 ubiquitin ligase acting as a positive post-transcriptional regulator of 3-hydroxy-3-methylglutaryl-coenzyme A reductase activity. Might be involved in the quality control that degrades misfolded proteins. This Arabidopsis thaliana (Mouse-ear cress) protein is Probable E3 ubiquitin ligase SUD1 (SUD1).